Reading from the N-terminus, the 196-residue chain is FMN-dependent NADH:quinone oxidoreductase (196 aa).

Ser-10 provides a ligand contact to FMN.

Belongs to the azoreductase type 1 family. In terms of assembly, homodimer. Requires FMN as cofactor.

It carries out the reaction 2 a quinone + NADH + H(+) = 2 a 1,4-benzosemiquinone + NAD(+). It catalyses the reaction N,N-dimethyl-1,4-phenylenediamine + anthranilate + 2 NAD(+) = 2-(4-dimethylaminophenyl)diazenylbenzoate + 2 NADH + 2 H(+). Functionally, quinone reductase that provides resistance to thiol-specific stress caused by electrophilic quinones. Its function is as follows. Also exhibits azoreductase activity. Catalyzes the reductive cleavage of the azo bond in aromatic azo compounds to the corresponding amines. This chain is FMN-dependent NADH:quinone oxidoreductase, found in Cereibacter sphaeroides (strain ATCC 17029 / ATH 2.4.9) (Rhodobacter sphaeroides).